We begin with the raw amino-acid sequence, 488 residues long: MNVLNEKSLTVRGKDRYKSGVMSYKKMGYWEPDYTPKDTDIICLFRVTPQDGVDPIEAAAAVAGESSTATWTVVWTDRLTAAEKYRAKCYRVDPVPGAEGQYFAYIAYDLDLFEPGSISNLTASVIGNVFGFKPLKALRLEDMRLPVAYVKTFKGPPTGIVVERERLDKFGRPLLGATVKPKLGLSGRNYGRVVYEALKGGLDFTKDDENINSQPFMHWRERFLYCMEAVNRAQAATGEIKGSYLNVTAATMEDMYERAEFAKELGSVVVMIDLVIGYTAIQSMSNWARKNDMILHLHRAGHSTYTRQRNHGVSFRVISKWMRLAGVDHIHAGTVVGKLEGDPLTTRGYYDICREEHNPMQLEHGIFFDQNWASLNKMMPVASGGIHAGQMHQLIQHLGEDVVLQFGGGTIGHPMGIQAGATANRVALEAMILARNEGRDYVSEGPDILAKAAASCTPLKQALEVWKDVTFNYQSTDAPDYVTTPAVA.

Positions 128 and 178 each coordinate substrate. Lys-180 acts as the Proton acceptor in catalysis. Position 182 (Lys-182) interacts with substrate. The Mg(2+) site is built by Lys-206, Asp-208, and Glu-209. An N6-carboxylysine modification is found at Lys-206. The active-site Proton acceptor is the His-298. Substrate contacts are provided by Arg-299, His-331, and Ser-383.

Belongs to the RuBisCO large chain family. Type I subfamily. As to quaternary structure, heterohexadecamer of 8 large chains and 8 small chains. Mg(2+) is required as a cofactor.

It catalyses the reaction 2 (2R)-3-phosphoglycerate + 2 H(+) = D-ribulose 1,5-bisphosphate + CO2 + H2O. The enzyme catalyses D-ribulose 1,5-bisphosphate + O2 = 2-phosphoglycolate + (2R)-3-phosphoglycerate + 2 H(+). RuBisCO catalyzes two reactions: the carboxylation of D-ribulose 1,5-bisphosphate, the primary event in carbon dioxide fixation, as well as the oxidative fragmentation of the pentose substrate. Both reactions occur simultaneously and in competition at the same active site. The chain is Ribulose bisphosphate carboxylase large chain 2 from Nitrobacter hamburgensis (strain DSM 10229 / NCIMB 13809 / X14).